A 28-amino-acid polypeptide reads, in one-letter code: Cruzioseptin-4 (28 aa).

Glutamic acid 1-amide is present on Glu-25. A propeptide spanning residues 27-28 (EH) is cleaved from the precursor.

In terms of tissue distribution, expressed by the skin glands.

It localises to the secreted. Its function is as follows. Has antimicrobial activity. This is Cruzioseptin-4 from Cruziohyla calcarifer (Splendid leaf frog).